The primary structure comprises 613 residues: UvrABC system protein C (613 aa).

In terms of domain architecture, GIY-YIG spans 20-98 (ERPGVYLMYD…IKRHKPRYNI (79 aa)). The UVR domain occupies 209 to 244 (FDVIESLGHKMQQASDEFEFEKAALYRDKISALRAI).

It belongs to the UvrC family. Interacts with UvrB in an incision complex.

The protein localises to the cytoplasm. In terms of biological role, the UvrABC repair system catalyzes the recognition and processing of DNA lesions. UvrC both incises the 5' and 3' sides of the lesion. The N-terminal half is responsible for the 3' incision and the C-terminal half is responsible for the 5' incision. The sequence is that of UvrABC system protein C from Hydrogenovibrio crunogenus (strain DSM 25203 / XCL-2) (Thiomicrospira crunogena).